We begin with the raw amino-acid sequence, 489 residues long: UDP-N-acetylmuramate--L-alanine ligase (489 aa).

ATP is bound at residue 128-134 (GTHGKTT).

This sequence belongs to the MurCDEF family.

It is found in the cytoplasm. It carries out the reaction UDP-N-acetyl-alpha-D-muramate + L-alanine + ATP = UDP-N-acetyl-alpha-D-muramoyl-L-alanine + ADP + phosphate + H(+). The protein operates within cell wall biogenesis; peptidoglycan biosynthesis. Cell wall formation. The chain is UDP-N-acetylmuramate--L-alanine ligase from Shewanella sediminis (strain HAW-EB3).